The primary structure comprises 123 residues: Small ribosomal subunit protein uS12 (123 aa).

The segment at 1–28 (MPTIQQLIRNPREPKRTRTKTPALKACP) is disordered. A 3-methylthioaspartic acid modification is found at Asp-89. Residues 104–123 (TQPVKNRKQRRSHYGAKKPK) form a disordered region. Basic residues predominate over residues 108 to 123 (KNRKQRRSHYGAKKPK).

The protein belongs to the universal ribosomal protein uS12 family. As to quaternary structure, part of the 30S ribosomal subunit. Contacts proteins S8 and S17. May interact with IF1 in the 30S initiation complex.

Functionally, with S4 and S5 plays an important role in translational accuracy. Interacts with and stabilizes bases of the 16S rRNA that are involved in tRNA selection in the A site and with the mRNA backbone. Located at the interface of the 30S and 50S subunits, it traverses the body of the 30S subunit contacting proteins on the other side and probably holding the rRNA structure together. The combined cluster of proteins S8, S12 and S17 appears to hold together the shoulder and platform of the 30S subunit. This Hyphomonas neptunium (strain ATCC 15444) protein is Small ribosomal subunit protein uS12.